Consider the following 515-residue polypeptide: UPF0053 protein BUsg_314 (515 aa).

Helical transmembrane passes span 14 to 34 (LTLV…VAIL), 49 to 69 (IGLG…SWVV), 79 to 99 (NFFS…FLLF), 125 to 145 (FWAV…DAII), 150 to 170 (MVNQ…LMLL), 185 to 205 (VVVL…AEAL), and 207 to 227 (FYIP…IEIF). CBS domains follow at residues 309-368 (MTPR…NIDV) and 372-432 (ASQI…DADE).

This sequence belongs to the UPF0053 family.

The protein resides in the cell membrane. The polypeptide is UPF0053 protein BUsg_314 (Buchnera aphidicola subsp. Schizaphis graminum (strain Sg)).